The sequence spans 421 residues: UDP-N-acetylglucosamine 1-carboxyvinyltransferase (421 aa).

23–24 (KN) contacts phosphoenolpyruvate. UDP-N-acetyl-alpha-D-glucosamine is bound at residue R92. C116 functions as the Proton donor in the catalytic mechanism. C116 bears the 2-(S-cysteinyl)pyruvic acid O-phosphothioketal mark. UDP-N-acetyl-alpha-D-glucosamine is bound by residues 121–125 (RPVDL), 161–164 (KVSV), D306, and I328.

This sequence belongs to the EPSP synthase family. MurA subfamily.

It is found in the cytoplasm. It catalyses the reaction phosphoenolpyruvate + UDP-N-acetyl-alpha-D-glucosamine = UDP-N-acetyl-3-O-(1-carboxyvinyl)-alpha-D-glucosamine + phosphate. It participates in cell wall biogenesis; peptidoglycan biosynthesis. In terms of biological role, cell wall formation. Adds enolpyruvyl to UDP-N-acetylglucosamine. The polypeptide is UDP-N-acetylglucosamine 1-carboxyvinyltransferase (Vibrio campbellii (strain ATCC BAA-1116)).